Reading from the N-terminus, the 359-residue chain is METLTASFFVRIASSIRAGYPTNMTDPIALVDRFGRRHDSLRISITDRCNIRCFYCMPEHDAEFLPRSGVLTFEEIERLAGLLVKRCGVRDIRITGGEPLVRRDCVDLIRMLARIDGLEDLSMTTNGMLLRDHAADLRSAGLKRLNVSLDTLDEATFVKIARRPGVDRVIDGIDAAIEAGFESIKLNALAIRGLSESELVGLVRFSIEKSVTLRFIEFMPLDSDRAWKSKDVLSGDACLKLLSEAFGDVTPTGRENPSAPAETFTLRCDGREGTIGIIRSVTRPFCGDCNRLRLTADGGLRNCLFSQSETPLRDAMRSGCDDDKLIQKIQQCVGEKHAAHGIDSDDFRPPERAMHAIGG.

The 228-residue stretch at 33 to 260 (RFGRRHDSLR…PTGRENPSAP (228 aa)) folds into the Radical SAM core domain. Arg-42 provides a ligand contact to GTP. Residues Cys-49 and Cys-53 each coordinate [4Fe-4S] cluster. Residue Tyr-55 participates in S-adenosyl-L-methionine binding. Cys-56 provides a ligand contact to [4Fe-4S] cluster. Position 93 (Arg-93) interacts with GTP. Residue Gly-97 coordinates S-adenosyl-L-methionine. GTP is bound at residue Thr-124. S-adenosyl-L-methionine is bound at residue Ser-148. Lys-185 contacts GTP. Residue Met-219 coordinates S-adenosyl-L-methionine. Residues Cys-286 and Cys-289 each contribute to the [4Fe-4S] cluster site. 291–293 (RLR) contributes to the GTP binding site. Cys-303 is a binding site for [4Fe-4S] cluster.

It belongs to the radical SAM superfamily. MoaA family. Monomer and homodimer. [4Fe-4S] cluster serves as cofactor.

The catalysed reaction is GTP + AH2 + S-adenosyl-L-methionine = (8S)-3',8-cyclo-7,8-dihydroguanosine 5'-triphosphate + 5'-deoxyadenosine + L-methionine + A + H(+). It functions in the pathway cofactor biosynthesis; molybdopterin biosynthesis. Catalyzes the cyclization of GTP to (8S)-3',8-cyclo-7,8-dihydroguanosine 5'-triphosphate. In Rhodopirellula baltica (strain DSM 10527 / NCIMB 13988 / SH1), this protein is GTP 3',8-cyclase.